Reading from the N-terminus, the 433-residue chain is tRNA(Ile2) 2-agmatinylcytidine synthetase TiaS (433 aa).

This sequence belongs to the TiaS family.

The protein resides in the cytoplasm. It catalyses the reaction cytidine(34) in tRNA(Ile2) + agmatine + ATP + H2O = 2-agmatinylcytidine(34) in tRNA(Ile2) + AMP + 2 phosphate + 2 H(+). Its function is as follows. ATP-dependent agmatine transferase that catalyzes the formation of 2-agmatinylcytidine (agm2C) at the wobble position (C34) of tRNA(Ile2), converting the codon specificity from AUG to AUA. The sequence is that of tRNA(Ile2) 2-agmatinylcytidine synthetase TiaS from Methanopyrus kandleri (strain AV19 / DSM 6324 / JCM 9639 / NBRC 100938).